A 440-amino-acid polypeptide reads, in one-letter code: MFLAQEIIRKKRDGHALSDEEIRFFINGIRDNTISEGQIAALAMTIFFHDMTMPERVSLTMAMRDSGTVLDWKSLHLNGPIVDKHSTGGVGDVTSLMLGPMVAACGGYIPMISGRGLGHTGGTLDKLESIPGFDIFPDDNRFREIIKDVGVAIIGQTSSLAPADKRFYATRDITATVDSIPLITASILAKKLAEGLDALVMDVKVGSGAFMPTYELSEALAEAIVGVANGAGVRTTALLTDMNQVLASSAGNAVEVREAVQFLTGEYRNPRLFDVTMALCVEMLISGKLAKDDAEARAKLQAVLDNGKAAEVFGRMVAAQKGPTDFVENYAKYLPTAMLTKAVYADTEGFVSEMDTRALGMAVVAMGGGRRQASDTIDYSVGFTDMARLGDQVDGQRPLAVIHAKDENSWQEASKAVKAAIKLADKAPESTPTVYRRISE.

Belongs to the thymidine/pyrimidine-nucleoside phosphorylase family. As to quaternary structure, homodimer.

The enzyme catalyses thymidine + phosphate = 2-deoxy-alpha-D-ribose 1-phosphate + thymine. Its pathway is pyrimidine metabolism; dTMP biosynthesis via salvage pathway; dTMP from thymine: step 1/2. The enzymes which catalyze the reversible phosphorolysis of pyrimidine nucleosides are involved in the degradation of these compounds and in their utilization as carbon and energy sources, or in the rescue of pyrimidine bases for nucleotide synthesis. This Shigella dysenteriae serotype 1 (strain Sd197) protein is Thymidine phosphorylase.